The chain runs to 94 residues: PqqA binding protein (94 aa).

The protein belongs to the PqqD family. Monomer. Interacts with PqqE.

The protein operates within cofactor biosynthesis; pyrroloquinoline quinone biosynthesis. Its function is as follows. Functions as a PqqA binding protein and presents PqqA to PqqE, in the pyrroloquinoline quinone (PQQ) biosynthetic pathway. This Acinetobacter baumannii (strain SDF) protein is PqqA binding protein.